Here is a 602-residue protein sequence, read N- to C-terminus: Probable translation initiation factor IF-2 (602 aa).

Residues 15-230 (LRTPIVAVLG…VLMGLSQRYL (216 aa)) enclose the tr-type G domain. A G1 region spans residues 24–31 (GHVDHGKT). Position 24 to 31 (24 to 31 (GHVDHGKT)) interacts with GTP. A G2 region spans residues 49 to 53 (AITQH). Positions 86-89 (DTPG) are G3. GTP is bound by residues 86–90 (DTPGH) and 140–143 (NKID). The interval 140 to 143 (NKID) is G4. The segment at 208–210 (SAE) is G5.

This sequence belongs to the TRAFAC class translation factor GTPase superfamily. Classic translation factor GTPase family. IF-2 subfamily.

Function in general translation initiation by promoting the binding of the formylmethionine-tRNA to ribosomes. Seems to function along with eIF-2. The chain is Probable translation initiation factor IF-2 from Natronomonas pharaonis (strain ATCC 35678 / DSM 2160 / CIP 103997 / JCM 8858 / NBRC 14720 / NCIMB 2260 / Gabara) (Halobacterium pharaonis).